Reading from the N-terminus, the 68-residue chain is uncharacterized protein (68 aa).

Residues 1–20 form a disordered region; that stretch reads MYKQKKKNHPFQCKKKKKKK. The chain crosses the membrane as a helical span at residues 27 to 44; sequence IKLLFNYFLFFNFIITTF.

The protein resides in the membrane. This is an uncharacterized protein from Dictyostelium discoideum (Social amoeba).